The primary structure comprises 454 residues: Keratin, type I cuticular Ha5 (454 aa).

Residues 1 to 97 (MASKCLKASF…FGEGILTGNE (97 aa)) are head. Positions 97-407 (EKETMQFLND…GLLDSEDCKL (311 aa)) constitute an IF rod domain. The segment at 98–125 (KETMQFLNDRLASYLEKCGSWSGRTRSW) is coil 1A. The interval 134–142 (SNSALPVPD) is linker 1. The tract at residues 143–243 (YQSYFQTIEE…HEEEVNSLRC (101 aa)) is coil 1B. The linker 12 stretch occupies residues 244–259 (QLGDRLNVEVDAAPPV). A coil 2 region spans residues 260 to 403 (DLNRVLNEMR…NTYRGLLDSE (144 aa)). Positions 404 to 454 (DCKLPCNPCAPDHSPSKSCLPCLPAASCGPGMARTTCSPRPICVPCPGSRF) are tail.

The protein belongs to the intermediate filament family.

The polypeptide is Keratin, type I cuticular Ha5 (Bos taurus (Bovine)).